Here is a 628-residue protein sequence, read N- to C-terminus: Kelch-like protein diablo (628 aa).

Residues 1 to 56 form a disordered region; it reads MGDLPGSTGGGSGPAAAGNASGNSSSAGNTGLGVAGTTGVDRPPSPARLSHTSEKH. Over residues 14-29 the composition is skewed to low complexity; sequence PAAAGNASGNSSSAGN. The BTB domain maps to 74-141; that stretch reads CDVVLNVGGR…CYTAHIIVEE (68 aa). In terms of domain architecture, BACK spans 176-278; it reads CLGIRAFADT…SPKFLVGTVG (103 aa). 6 Kelch repeats span residues 325 to 371, 373 to 419, 420 to 466, 468 to 513, 515 to 560, and 561 to 607; these read VLFA…VLND, LYAV…VLDG, FLYA…VLGG, LYAI…VFNN, IYAV…VVNG, and QLYA…VMRA.

It functions in the pathway protein modification; protein ubiquitination. Probable substrate-specific adapter of an E3 ubiquitin-protein ligase complex which mediates the ubiquitination and subsequent proteasomal degradation of target proteins. May have a role in synapse differentiation and growth. In Drosophila persimilis (Fruit fly), this protein is Kelch-like protein diablo.